Consider the following 144-residue polypeptide: Actin-associated protein FAM107A (144 aa).

A coiled-coil region spans residues 66 to 112; the sequence is ELQRVLEHRRRNQLIKKKKEELEAKRLQCPFEQELLRRQQRLNQLEK. Residues 74–84 carry the Nuclear localization signal motif; the sequence is RRRNQLIKKKK. The segment at 105-124 is disordered; that stretch reads QRLNQLEKPPEKEEDHAPEF. The segment covering 112 to 124 has biased composition (basic and acidic residues); sequence KPPEKEEDHAPEF.

The protein belongs to the FAM107 family. Interacts with ACTB. Interacts with COMMD1; this interaction stabilizes COMMD1 in the nucleus. Interacts with MAP1A. Interacts with PRDX1. Interacts with F-actin. Widely expressed. Expressed in neurons. Expressed in malignant glial tumors. Expression is reduced or absent in a number of cancer cell lines.

Its subcellular location is the nucleus. It is found in the cytoplasm. The protein resides in the cytoskeleton. The protein localises to the stress fiber. It localises to the cell junction. Its subcellular location is the focal adhesion. It is found in the cell projection. The protein resides in the ruffle membrane. The protein localises to the synapse. In terms of biological role, stress-inducible actin-binding protein that plays a role in synaptic and cognitive functions by modulating actin filamentous (F-actin) dynamics. Mediates polymerization of globular actin to F-actin. Also binds to, stabilizes and bundles F-actin. Involved in synaptic function by regulating neurite outgrowth in an actin-dependent manner and for the acquisition of hippocampus-dependent cognitive function, such as learning and long-term memory. Plays a role in the actin and microtubule cytoskeleton organization; negatively regulates focal adhesion (FA) assembly promoting malignant glial cell migration in an actin-, microtubule- and MAP1A-dependent manner. Also involved in neuroblastoma G1/S phase cell cycle progression and cell proliferation inhibition by stimulating ubiquitination of NF-kappa-B subunit RELA and NF-kappa-B degradation in a COMMD1- and actin-dependent manner. May play a role in tumor development. The polypeptide is Actin-associated protein FAM107A (Homo sapiens (Human)).